A 251-amino-acid polypeptide reads, in one-letter code: MPPVDKQAVAAAFGRAAPHYQQHNELQRRSADALMARLPARRFARVLDAGCGPGGISRYWRDNGCEVTALDLSAQMLAEARRQQAADHYVQADIEAIPLASAQFDLVWSNLAVQWCDSLQDAVQELYRMLRPGGVLAFTTLAADSLPELRQAWRAIDEKPHANRFLSREALDSALSGLRGEFALQTLSVPFADALSAMRSLKGIGATHLHEGRASRTLTRSRLQQLQLAWPKQQGACPLTYHIFTGVMTRD.

Belongs to the methyltransferase superfamily.

It carries out the reaction malonyl-[ACP] + S-adenosyl-L-methionine = malonyl-[ACP] methyl ester + S-adenosyl-L-homocysteine. The protein operates within cofactor biosynthesis; biotin biosynthesis. Functionally, converts the free carboxyl group of a malonyl-thioester to its methyl ester by transfer of a methyl group from S-adenosyl-L-methionine (SAM). It allows to synthesize pimeloyl-ACP via the fatty acid synthetic pathway. This is Malonyl-[acyl-carrier protein] O-methyltransferase from Enterobacter lignolyticus (strain SCF1).